The chain runs to 280 residues: Digeranylgeranylglyceryl phosphate synthase (280 aa).

9 helical membrane-spanning segments follow: residues Ala4–Leu24, Ile27–Ile47, Leu83–Leu103, Pro104–Lys124, Leu128–Ile148, Gly150–Ala170, Ala199–Tyr219, Trp222–Ile242, and Lys260–Leu280.

It belongs to the UbiA prenyltransferase family. DGGGP synthase subfamily. The cofactor is Mg(2+).

The protein resides in the cell membrane. It carries out the reaction sn-3-O-(geranylgeranyl)glycerol 1-phosphate + (2E,6E,10E)-geranylgeranyl diphosphate = 2,3-bis-O-(geranylgeranyl)-sn-glycerol 1-phosphate + diphosphate. It participates in membrane lipid metabolism; glycerophospholipid metabolism. Prenyltransferase that catalyzes the transfer of the geranylgeranyl moiety of geranylgeranyl diphosphate (GGPP) to the C2 hydroxyl of (S)-3-O-geranylgeranylglyceryl phosphate (GGGP). This reaction is the second ether-bond-formation step in the biosynthesis of archaeal membrane lipids. The chain is Digeranylgeranylglyceryl phosphate synthase from Methanospirillum hungatei JF-1 (strain ATCC 27890 / DSM 864 / NBRC 100397 / JF-1).